The sequence spans 883 residues: Probable ribonuclease ZC3H12C (883 aa).

Disordered regions lie at residues 53-109 (QLSP…ISVE) and 139-158 (DFKPEESQTTSKEAKKPPDV). A Phosphoserine modification is found at Ser230. The RNase NYN domain occupies 245–400 (LRPIVIDGSN…LGRHGPSLDN (156 aa)). The C3H1-type zinc-finger motif lies at 410 to 435 (EHKKQPCPYGKKCTYGHKCKYYHPER). Disordered stretches follow at residues 456 to 551 (AKTA…FPPQ), 680 to 738 (FHDP…KAPH), and 754 to 775 (SRLYDSSPSRQRKPYSRQEGLG). Residues 466–477 (KSNSVPCSTKAD) are compositionally biased toward polar residues. A compositionally biased stretch (basic and acidic residues) spans 503–515 (LEEKLPTKNKLET). The segment covering 517 to 542 (SVPSLVSIPATSTAKPQSTTSLSNGL) has biased composition (polar residues). Residues 705 to 714 (HLALHLPHSA) are compositionally biased toward low complexity.

It belongs to the ZC3H12 family. Mg(2+) serves as cofactor.

Its function is as follows. May function as RNase and regulate the levels of target RNA species. The chain is Probable ribonuclease ZC3H12C (ZC3H12C) from Homo sapiens (Human).